Consider the following 284-residue polypeptide: ATP synthase subunit a (284 aa).

6 consecutive transmembrane segments (helical) span residues 55 to 75 (AIHV…LGLF), 116 to 136 (IAPL…LKLI), 165 to 185 (FGMS…VKGV), 196 to 216 (PFNH…ALII), 234 to 254 (VVFI…NVPW), and 255 to 275 (AIFH…LTVV).

The protein belongs to the ATPase A chain family. In terms of assembly, F-type ATPases have 2 components, CF(1) - the catalytic core - and CF(0) - the membrane proton channel. CF(1) has five subunits: alpha(3), beta(3), gamma(1), delta(1), epsilon(1). CF(0) has three main subunits: a(1), b(2) and c(9-12). The alpha and beta chains form an alternating ring which encloses part of the gamma chain. CF(1) is attached to CF(0) by a central stalk formed by the gamma and epsilon chains, while a peripheral stalk is formed by the delta and b chains.

The protein localises to the cell inner membrane. Key component of the proton channel; it plays a direct role in the translocation of protons across the membrane. In Marinobacter nauticus (strain ATCC 700491 / DSM 11845 / VT8) (Marinobacter aquaeolei), this protein is ATP synthase subunit a.